We begin with the raw amino-acid sequence, 231 residues long: Ribonuclease HII (231 aa).

The RNase H type-2 domain maps to 38–227 (ELVAGGDEAG…IKSFYGQLKL (190 aa)). A divalent metal cation is bound by residues D44, E45, and D136.

The protein belongs to the RNase HII family. Mn(2+) is required as a cofactor. It depends on Mg(2+) as a cofactor.

Its subcellular location is the cytoplasm. It carries out the reaction Endonucleolytic cleavage to 5'-phosphomonoester.. Functionally, endonuclease that specifically degrades the RNA of RNA-DNA hybrids. The sequence is that of Ribonuclease HII from Carboxydothermus hydrogenoformans (strain ATCC BAA-161 / DSM 6008 / Z-2901).